The chain runs to 187 residues: Probable GTP-binding protein EngB (187 aa).

An EngB-type G domain is found at 18 to 187 (KNSEIAFWGR…KLKENINSNF (170 aa)). GTP-binding positions include 26–33 (GRSNVGKS), 52–56 (GRTQL), 70–73 (DLPG), 137–140 (TKID), and 168–170 (VSS). Residues Ser-33 and Thr-54 each contribute to the Mg(2+) site.

This sequence belongs to the TRAFAC class TrmE-Era-EngA-EngB-Septin-like GTPase superfamily. EngB GTPase family. Mg(2+) serves as cofactor.

Functionally, necessary for normal cell division and for the maintenance of normal septation. The protein is Probable GTP-binding protein EngB of Mycoplasmopsis synoviae (strain 53) (Mycoplasma synoviae).